The chain runs to 226 residues: Glycerol-3-phosphate acyltransferase (226 aa).

6 consecutive transmembrane segments (helical) span residues 1–21 (MGFW…LGSF), 60–80 (FVLG…YYLF), 102–122 (LVTL…FLGF), 134–154 (ILLA…AVVV), 159–178 (IVSL…MVFL), and 182–197 (LPYI…YVIL).

This sequence belongs to the PlsY family. In terms of assembly, probably interacts with PlsX.

It is found in the cell inner membrane. It carries out the reaction an acyl phosphate + sn-glycerol 3-phosphate = a 1-acyl-sn-glycero-3-phosphate + phosphate. Its pathway is lipid metabolism; phospholipid metabolism. Its function is as follows. Catalyzes the transfer of an acyl group from acyl-phosphate (acyl-PO(4)) to glycerol-3-phosphate (G3P) to form lysophosphatidic acid (LPA). This enzyme utilizes acyl-phosphate as fatty acyl donor, but not acyl-CoA or acyl-ACP. The sequence is that of Glycerol-3-phosphate acyltransferase from Nostoc sp. (strain PCC 7120 / SAG 25.82 / UTEX 2576).